Consider the following 394-residue polypeptide: Aspergillopepsin-1 (394 aa).

The N-terminal stretch at 1 to 20 (MVVFSKTAALVLGLSSAVSA) is a signal peptide. Positions 21–69 (APAPTRKGFTINQIARPANKTRTINLPGMYARSLAKFGGTVPQSVKEAA) are cleaved as a propeptide — activation peptide. One can recognise a Peptidase A1 domain in the interval 85–391 (YLTPVTVGKS…NSEGPKLGFA (307 aa)). Residues D101 and D283 contribute to the active site. An intrachain disulfide couples C319 to C354.

This sequence belongs to the peptidase A1 family. Monomer.

It is found in the secreted. It carries out the reaction Hydrolysis of proteins with broad specificity. Generally favors hydrophobic residues in P1 and P1', but also accepts Lys in P1, which leads to activation of trypsinogen. Does not clot milk.. Functionally, secreted aspartic endopeptidase that allows assimilation of proteinaceous substrates. The scissile peptide bond is attacked by a nucleophilic water molecule activated by two aspartic residues in the active site. Shows a broad primary substrate specificity. Favors hydrophobic residues at the P1 and P1' positions, but also accepts a lysine residue in the P1 position, leading to the activation of trypsinogen and chymotrypsinogen A. This chain is Aspergillopepsin-1 (pepA), found in Aspergillus niger (strain ATCC MYA-4892 / CBS 513.88 / FGSC A1513).